Here is a 566-residue protein sequence, read N- to C-terminus: APC/C activator protein CDH1 (566 aa).

Residues 1 to 18 (MSTNLNPFMNNTPSSSPL) are compositionally biased toward polar residues. The segment at 1–56 (MSTNLNPFMNNTPSSSPLKGSESKRVSKRPISSSSSASLLSSPSRRSRPSTVYGDR) is disordered. Residues 29–44 (RPISSSSSASLLSSPS) show a composition bias toward low complexity. The short motif at 55 to 61 (DRYIPSR) is the C-box element. Ser213 is subject to Phosphoserine. WD repeat units follow at residues 258-298 (PSLA…VVHL), 300-339 (DTEN…CIRT), 342-379 (GHID…PFFE), 383-422 (SHTQ…PILT), 425-467 (EHKA…KMSD), 469-510 (DSGS…PIAI), and 513-552 (GHSF…KAKV).

This sequence belongs to the WD repeat CDC20/Fizzy family. In terms of assembly, associates with the APC/C complex. Interacts with CLB2, CLB3, CDC5, HSL1, MSN5 and PSE1. In terms of processing, phosphorylated at multiple sites by CDC28, probably in its CLB5 bound form, in S, G2 and M phase of the cell cycle, thereby blocking the association of CDH1 to the APC/C and promoting nuclear export of CDH1 by MSN5. Dephosphorylated and activated by CDC14 in late anaphase, which may be necessary for PSE1-dependent nuclear localization.

The protein localises to the cytoplasm. Its subcellular location is the nucleus. Functionally, activator protein that regulates the ubiquitin ligase activity and substrate specificity of the anaphase promoting complex/cyclosome (APC/C). During telophase and in the subsequent G1 phase of the cell cycle, recognizes and binds proteins containing a destruction box (D-box) and an additional degradation signal termed the KEN box including ASE1, CDC20, the B-type cyclins CLB2 and CLB3, the polo-like kinase CDC5 and HSL1, and recruits them in a C-box-dependent manner to the APC/C for ubiquitination and subsequent proteolysis. Required for exit from mitosis, cytokinesis and formation of prereplicative complexes in G1. Probably is the target of a BUB2-dependent spindle checkpoint pathway. This is APC/C activator protein CDH1 (CDH1) from Saccharomyces cerevisiae (strain ATCC 204508 / S288c) (Baker's yeast).